A 360-amino-acid polypeptide reads, in one-letter code: Dual-specificity RNA methyltransferase RlmN (360 aa).

Glu93 (proton acceptor) is an active-site residue. The region spanning 99–326 is the Radical SAM core domain; that stretch reads EEDRNTLCIS…VITRSSRGAD (228 aa). An intrachain disulfide couples Cys106 to Cys331. 3 residues coordinate [4Fe-4S] cluster: Cys113, Cys117, and Cys120. S-adenosyl-L-methionine is bound by residues 158–159, Ser190, 212–214, and Asn288; these read GE and SLN. Cys331 (S-methylcysteine intermediate) is an active-site residue.

It belongs to the radical SAM superfamily. RlmN family. It depends on [4Fe-4S] cluster as a cofactor.

The protein localises to the cytoplasm. It catalyses the reaction adenosine(2503) in 23S rRNA + 2 reduced [2Fe-2S]-[ferredoxin] + 2 S-adenosyl-L-methionine = 2-methyladenosine(2503) in 23S rRNA + 5'-deoxyadenosine + L-methionine + 2 oxidized [2Fe-2S]-[ferredoxin] + S-adenosyl-L-homocysteine. The enzyme catalyses adenosine(37) in tRNA + 2 reduced [2Fe-2S]-[ferredoxin] + 2 S-adenosyl-L-methionine = 2-methyladenosine(37) in tRNA + 5'-deoxyadenosine + L-methionine + 2 oxidized [2Fe-2S]-[ferredoxin] + S-adenosyl-L-homocysteine. Its function is as follows. Specifically methylates position 2 of adenine 2503 in 23S rRNA and position 2 of adenine 37 in tRNAs. m2A2503 modification seems to play a crucial role in the proofreading step occurring at the peptidyl transferase center and thus would serve to optimize ribosomal fidelity. This is Dual-specificity RNA methyltransferase RlmN from Geobacter sulfurreducens (strain ATCC 51573 / DSM 12127 / PCA).